The chain runs to 357 residues: Serpentine receptor class epsilon-30 (357 aa).

The next 7 helical transmembrane spans lie at 31–51, 61–81, 121–141, 165–185, 192–212, 253–273, and 283–303; these read IFELSSCILCGYILNLSIFVM, LMFLTVPLFAIWHELIIGKFI, LLIFGGFLQWHTIYSIVFGIL, IPIILTIISQLLSISISLAII, FLARLPFVICAPLSVLVFLFI, LVVVVIFYISICGFGIAALTF, and LIENFLFLHPYPICLTAMFSI.

This sequence belongs to the nematode receptor-like protein sre family.

The protein localises to the membrane. The polypeptide is Serpentine receptor class epsilon-30 (sre-30) (Caenorhabditis elegans).